The sequence spans 773 residues: DEAD-box ATP-dependent RNA helicase 32 (773 aa).

The tract at residues 28 to 71 (IDAGKPARGTRPPPLSKSSSSPADTAAAKRGAKGAGGVPSKAAG) is disordered. Residues 43–56 (SKSSSSPADTAAAK) are compositionally biased toward low complexity. Residues 80-108 (ARFDELPLSNKTKDGLRKAGYTEMSEIQR) carry the Q motif motif. Residues 111–287 (LPHALCGRDV…RVSLKDPEYI (177 aa)) form the Helicase ATP-binding domain. 124-131 (AKTGSGKT) provides a ligand contact to ATP. The DEAD box motif lies at 235–238 (DEAD). The Helicase C-terminal domain occupies 309–462 (PLEQKLNMLW…IKKPNTEQLQ (154 aa)). Positions 664–715 (DKDKISQRYAEMLREMQEHDKEDKLEHKRILREKKLQKKLKLKRKRNEEMDA) form a coiled coil. Positions 699–708 (LQKKLKLKRK) are enriched in basic residues. The tract at residues 699 to 755 (LQKKLKLKRKRNEEMDAGSENSGSESDRDQRTASKGKKRYFNSDDEEGSKDAAKDGD) is disordered.

This sequence belongs to the DEAD box helicase family. DDX10/DBP4 subfamily.

The catalysed reaction is ATP + H2O = ADP + phosphate + H(+). The protein is DEAD-box ATP-dependent RNA helicase 32 of Oryza sativa subsp. japonica (Rice).